Consider the following 179-residue polypeptide: ATP synthase subunit b, chloroplastic (179 aa).

A helical membrane pass occupies residues 28 to 46 (IINIAALVGILIYAGRDFL).

It belongs to the ATPase B chain family. In terms of assembly, F-type ATPases have 2 components, F(1) - the catalytic core - and F(0) - the membrane proton channel. F(1) has five subunits: alpha(3), beta(3), gamma(1), delta(1), epsilon(1). F(0) has four main subunits: a(1), b(1), b'(1) and c(10-14). The alpha and beta chains form an alternating ring which encloses part of the gamma chain. F(1) is attached to F(0) by a central stalk formed by the gamma and epsilon chains, while a peripheral stalk is formed by the delta, b and b' chains.

The protein localises to the plastid. It is found in the chloroplast thylakoid membrane. Functionally, f(1)F(0) ATP synthase produces ATP from ADP in the presence of a proton or sodium gradient. F-type ATPases consist of two structural domains, F(1) containing the extramembraneous catalytic core and F(0) containing the membrane proton channel, linked together by a central stalk and a peripheral stalk. During catalysis, ATP synthesis in the catalytic domain of F(1) is coupled via a rotary mechanism of the central stalk subunits to proton translocation. Component of the F(0) channel, it forms part of the peripheral stalk, linking F(1) to F(0). This Trieres chinensis (Marine centric diatom) protein is ATP synthase subunit b, chloroplastic.